The primary structure comprises 457 residues: Argininosuccinate lyase (457 aa).

This sequence belongs to the lyase 1 family. Argininosuccinate lyase subfamily.

Its subcellular location is the cytoplasm. The enzyme catalyses 2-(N(omega)-L-arginino)succinate = fumarate + L-arginine. It functions in the pathway amino-acid biosynthesis; L-arginine biosynthesis; L-arginine from L-ornithine and carbamoyl phosphate: step 3/3. This is Argininosuccinate lyase from Haemophilus influenzae (strain 86-028NP).